The primary structure comprises 274 residues: Shikimate dehydrogenase (NADP(+)) (274 aa).

Shikimate is bound by residues 14–16 and Thr-61; that span reads SKS. The active-site Proton acceptor is Lys-65. Residues Asn-86 and Asp-102 each contribute to the shikimate site. NADP(+)-binding positions include 126–130, 150–155, and Met-214; these read GAGGA and NRTAEK. Tyr-216 lines the shikimate pocket. Gly-239 serves as a coordination point for NADP(+).

It belongs to the shikimate dehydrogenase family. As to quaternary structure, homodimer.

The enzyme catalyses shikimate + NADP(+) = 3-dehydroshikimate + NADPH + H(+). It participates in metabolic intermediate biosynthesis; chorismate biosynthesis; chorismate from D-erythrose 4-phosphate and phosphoenolpyruvate: step 4/7. In terms of biological role, involved in the biosynthesis of the chorismate, which leads to the biosynthesis of aromatic amino acids. Catalyzes the reversible NADPH linked reduction of 3-dehydroshikimate (DHSA) to yield shikimate (SA). In Pseudoalteromonas translucida (strain TAC 125), this protein is Shikimate dehydrogenase (NADP(+)).